The following is a 231-amino-acid chain: TATA-box-binding protein (231 aa).

Tandem repeats lie at residues 58–134 (LQNI…ARII) and 148–225 (IQNI…YPVL).

It belongs to the TBP family. As to quaternary structure, belongs to the TFIID complex together with the TBP-associated factors (TAFs). Binds DNA as monomer.

Its subcellular location is the nucleus. Functionally, general transcription factor that functions at the core of the DNA-binding multiprotein factor TFIID. Binding of TFIID to the TATA box is the initial transcriptional step of the pre-initiation complex (PIC), playing a role in the activation of eukaryotic genes transcribed by RNA polymerase II. The polypeptide is TATA-box-binding protein (tbp1) (Schizosaccharomyces pombe (strain 972 / ATCC 24843) (Fission yeast)).